We begin with the raw amino-acid sequence, 424 residues long: Dehydrogenase FUM7 (424 aa).

This sequence belongs to the iron-containing alcohol dehydrogenase family. Requires Fe cation as cofactor.

Its pathway is mycotoxin biosynthesis. Functionally, dehydrogenase; part of the gene cluster that mediates the biosynthesis of fumonisins B1 (FB1), B2 (FB2), B3 (FB3), and B4 (FB4), which are carcinogenic mycotoxins. Within the pathway, FUM7 is involved the addition of the tricarballylic moieties to the carbon backbone. FUM7 dehydrogenase removes the C-3 hydroxyl of citrate to form tricarballylic acid either before or after the CoA activation by the FUM10 acyl-CoA synthetase and FUM14 catalyzed esterification of CoA-activated tricarballylic acid to the C-14 and C-15 hydroxyls of the fumonisin backbone. The biosynthesis starts with the FUM1-catalyzed carbon chain assembly from one molecule of acetyl-CoA, eight molecules of malonyl-CoA, and two molecules of methionine (in S-adenosyl form). The C18 polyketide chain is released from the enzyme by a nucleophilic attack of a carbanion, which is derived from R-carbon of alanine by decarboxylation, on the carbonyl carbon of polyketide acyl chain. This step is catalyzed by the pyridoxal 5'-phosphate-dependent aminoacyl transferase FUM8. The resultant 3-keto intermediate is then stereospecifically reduced to a 3-hydroxyl product by reductase FUM13. Subsequent oxidations at C-10 by the cytochrome P450 monooxygenase FUM2, C-14 and C-15 by FUM6, FUM12 or FUM15, tricarballylic esterification of the hydroxyl groups on C-14 and C-15 by acyltransferase FUM14, and C-5 hydroxylation by 2-keto-glutarate-dependent dioxygenase FUM3 furnish the biosynthesis of fumonisins. The tricarballylic moieties are most likely derived from the citric acid cycle, and their addition to the carbon backbone may involve FUM7, FUM10, FUM11 and FUM14. The protein is Dehydrogenase FUM7 of Gibberella moniliformis (strain M3125 / FGSC 7600) (Maize ear and stalk rot fungus).